Consider the following 205-residue polypeptide: uncharacterized protein (205 aa).

The region spanning 11–71 (KTRRALVDAA…EMVDEAGLML (61 aa)) is the HTH tetR-type domain.

This is an uncharacterized protein from Haemophilus influenzae (strain ATCC 51907 / DSM 11121 / KW20 / Rd).